Reading from the N-terminus, the 101-residue chain is Cell cycle protein GpsB (101 aa).

Residues 34 to 71 adopt a coiled-coil conformation; that stretch reads LDMVIKDYETFNQEIEKLQQENLHLSKQLEEAVEQGKR.

Belongs to the GpsB family. Forms polymers through the coiled coil domains. Interacts with PBP1, MreC and EzrA.

The protein resides in the cytoplasm. Its function is as follows. Divisome component that associates with the complex late in its assembly, after the Z-ring is formed, and is dependent on DivIC and PBP2B for its recruitment to the divisome. Together with EzrA, is a key component of the system that regulates PBP1 localization during cell cycle progression. Its main role could be the removal of PBP1 from the cell pole after pole maturation is completed. Also contributes to the recruitment of PBP1 to the division complex. Not essential for septum formation. This is Cell cycle protein GpsB from Bacillus pumilus (strain SAFR-032).